The chain runs to 679 residues: Glycine--tRNA ligase beta subunit (679 aa).

The protein belongs to the class-II aminoacyl-tRNA synthetase family. As to quaternary structure, tetramer of two alpha and two beta subunits.

The protein resides in the cytoplasm. The catalysed reaction is tRNA(Gly) + glycine + ATP = glycyl-tRNA(Gly) + AMP + diphosphate. The chain is Glycine--tRNA ligase beta subunit from Streptococcus mutans serotype c (strain ATCC 700610 / UA159).